We begin with the raw amino-acid sequence, 239 residues long: tRNA (guanine-N(7)-)-methyltransferase (239 aa).

S-adenosyl-L-methionine-binding residues include Glu-69, Glu-94, Asp-121, and Asp-144. The active site involves Asp-144. Substrate is bound at residue Lys-148. Residues 150–155 form an interaction with RNA region; it reads RHNKRR. Residues Asp-180 and 217–220 each bind substrate; that span reads TKFE.

The protein belongs to the class I-like SAM-binding methyltransferase superfamily. TrmB family. Monomer.

The enzyme catalyses guanosine(46) in tRNA + S-adenosyl-L-methionine = N(7)-methylguanosine(46) in tRNA + S-adenosyl-L-homocysteine. The protein operates within tRNA modification; N(7)-methylguanine-tRNA biosynthesis. Catalyzes the formation of N(7)-methylguanine at position 46 (m7G46) in tRNA. The protein is tRNA (guanine-N(7)-)-methyltransferase of Yersinia pestis (strain Pestoides F).